The sequence spans 1244 residues: Mitotic chromosome and X-chromosome-associated protein mix-1 (1244 aa).

32–39 (GYNGSGKS) provides a ligand contact to ATP. Residues 247–355 (VKKSAKEIED…AKRKEHEDSK (109 aa)) are a coiled coil. Residues 337 to 355 (LSKDREVLDAKRKEHEDSK) show a composition bias toward basic and acidic residues. The tract at residues 337 to 369 (LSKDREVLDAKRKEHEDSKAANSKDIQSQSDDE) is disordered. Positions 356 to 365 (AANSKDIQSQ) are enriched in polar residues. The stretch at 415-472 (ITAAKKRGERLHNQIKHLEGEKATLSARSKSDIGSADNYQKEVDEINKQLQLLGFNID) forms a coiled coil. In terms of domain architecture, SMC hinge spans 526–654 (DVFGYVAHLI…DSLDVAREIA (129 aa)). 2 coiled-coil regions span residues 701–946 (PQIE…RKEA) and 975–1037 (YTVS…IATL). Residues 919-932 (AKTKSKREEKEKEL) are compositionally biased toward basic and acidic residues. The interval 919–943 (AKTKSKREEKEKELTSLQQSEASNR) is disordered. Residues 1216–1232 (DAAAKKGAQKNDKEPPK) are compositionally biased toward basic and acidic residues. Residues 1216 to 1244 (DAAAKKGAQKNDKEPPKKKPIVVDDDDFE) form a disordered region.

This sequence belongs to the SMC family. SMC2 subfamily. Component of the condensin I complex, which contains the mix-1/SMC2 and smc-4/SMC4 heterodimer, and three non SMC subunits that probably regulate the complex: dpy-26, capg-1 and dpy-28. Within the complex, interacts with smc-4, dpy-26, dpy-28 and capg-1. Interaction with smc-4 is required for mitotic chromosome localization. Component of the condensin II complex, which contains the mix-1/SMC2 and smc-4/SMC4 heterodimer, and three non SMC subunits, capg-2, kle-2 and hcp-6 that probably regulate the complex. Within the complex, interacts with smc-4, capg-2, kle-2 and hcp-6. Also a component of the condensin-like dosage compensation complex, which contains the mix-1/SMC2 and dpy-27/SMC4 heterodimer, and three non SMC subunits that probably regulate the complex: dpy-26, capg-1 and dpy-28. Within the complex, interacts with dpy-27, dpy-26, capg-1 and dpy-28. Requires capg-1 for hermaphrodite X chromosome localization. Interacts with smcl-1. Expressed in embryos and in adult somatic and germline tissues (at protein level).

It is found in the nucleus. It localises to the chromosome. Its function is as follows. Essential protein required for both chromosome condensation and segregation and X-chromosome dosage compensation depending on its binding partners. Central component of the condensin I complex, a complex required for conversion of interphase chromatin into mitotic-like condense chromosomes. The condensin complex introduces positive supercoils into relaxed DNA in the presence of type I topoisomerases. Converts nicked DNA into positive knotted forms in the presence of type II topoisomerases. Central component of the condensin II complex, a complex that seems to play a role in prophase chromosome condensation and organization. Both the condensin complex I and II play a role in meiotic and mitotic chromosome segregation. Plays a role in robust cytokinesis upon the presence of chromatin obstructions. Also a member of the condensin I-like dosage compensation complex that associates specifically with hermaphrodite X chromosomes to reduce their gene transcription during interphase. The chain is Mitotic chromosome and X-chromosome-associated protein mix-1 (mix-1) from Caenorhabditis elegans.